Reading from the N-terminus, the 305-residue chain is tRNA pseudouridine synthase B (305 aa).

The Nucleophile role is filled by D48.

Belongs to the pseudouridine synthase TruB family. Type 1 subfamily.

The enzyme catalyses uridine(55) in tRNA = pseudouridine(55) in tRNA. Functionally, responsible for synthesis of pseudouridine from uracil-55 in the psi GC loop of transfer RNAs. The polypeptide is tRNA pseudouridine synthase B (Pseudomonas fluorescens (strain ATCC BAA-477 / NRRL B-23932 / Pf-5)).